A 669-amino-acid polypeptide reads, in one-letter code: Histone-lysine N-methyltransferase, H3 lysine-9 specific SUVH3 (669 aa).

2 disordered regions span residues 56–127 and 270–290; these read YSSF…EKKT and ESLIYSGQGGNADKNRQASDQ. Composition is skewed to polar residues over residues 65–82 and 93–107; these read QQPTHDTPDLNQTQNTPI and RTPTKTNGPSSSSGT. Positions 108-120 form a DNA-binding region, a.T hook; that stretch reads KRGVGRPKGTTSV. Positions 208–355 constitute a YDG domain; the sequence is GTVPGIEVGD…CNTFKYKLVR (148 aa). One can recognise a Pre-SET domain in the interval 430–491; it reads IGCSCSGSCS…SCKNRVIQTG (62 aa). C432, C434, C438, C445, C447, C473, C477, C479, and C483 together coordinate Zn(2+). An SET domain is found at 494–638; the sequence is SRLEVFKTRN…PMAELTYDYG (145 aa). Residues 504–506, D540, Y542, R592, and 595–596 each bind S-adenosyl-L-methionine; these read RGW and NH. Zn(2+) is bound by residues C598, C657, C659, and C664. One can recognise a Post-SET domain in the interval 653–669; it reads GQRTCLCGSEQCRGSFG.

This sequence belongs to the class V-like SAM-binding methyltransferase superfamily. Histone-lysine methyltransferase family. Suvar3-9 subfamily. In terms of tissue distribution, expressed in leaves stems and flowers.

The protein localises to the nucleus. It localises to the chromosome. It is found in the centromere. The catalysed reaction is L-lysyl(9)-[histone H3] + S-adenosyl-L-methionine = N(6)-methyl-L-lysyl(9)-[histone H3] + S-adenosyl-L-homocysteine + H(+). Its function is as follows. Histone methyltransferase. Methylates 'Lys-9' of histone H3. H3 'Lys-9' methylation represents a specific tag for epigenetic transcriptional repression. The protein is Histone-lysine N-methyltransferase, H3 lysine-9 specific SUVH3 (SUVH3) of Arabidopsis thaliana (Mouse-ear cress).